Here is a 190-residue protein sequence, read N- to C-terminus: dTTP/UTP pyrophosphatase (190 aa).

D71 functions as the Proton acceptor in the catalytic mechanism.

The protein belongs to the Maf family. YhdE subfamily. A divalent metal cation serves as cofactor.

The protein resides in the cytoplasm. The enzyme catalyses dTTP + H2O = dTMP + diphosphate + H(+). It carries out the reaction UTP + H2O = UMP + diphosphate + H(+). Its function is as follows. Nucleoside triphosphate pyrophosphatase that hydrolyzes dTTP and UTP. May have a dual role in cell division arrest and in preventing the incorporation of modified nucleotides into cellular nucleic acids. The sequence is that of dTTP/UTP pyrophosphatase from Xanthomonas axonopodis pv. citri (strain 306).